The sequence spans 179 residues: Avenin-like a2 (179 aa).

The signal sequence occupies residues 1 to 19 (MKTMFLLALLAFTATSAVA).

It belongs to the prolamin family. Contains 7 disulfide bonds.

In terms of biological role, seed storage protein. Not integrated in the gluten polymer through disulfide bonds, unless incorporated by reduction and reoxidation during dough making. Increases dough strength and bread volume, but decreases dough stability when added into a base wheat flour. This is Avenin-like a2 from Triticum aestivum (Wheat).